Reading from the N-terminus, the 113-residue chain is Protein USP2 (113 aa).

The N-terminal stretch at 1–18 is a signal peptide; sequence MKITMFFAALSAASGVFA. 6 repeat units span residues 32–37, 40–45, 46–49, 50–53, 59–65, and 69–75. The segment at 32–45 is 2 X 6 AA repeats; that stretch reads IGAGVGIGIGAGVG. The tract at residues 46 to 53 is 2 X 4 AA approximate tandem repeats; the sequence is SYGYPYGA. The interval 59–75 is 2 X 7 AA approximate repeats; that stretch reads LQLLPLRWLPLRRLPLR.

The protein localises to the secreted. This chain is Protein USP2 (USP2), found in Puccinia graminis (Black stem rust fungus).